Consider the following 270-residue polypeptide: tRNA pseudouridine synthase A (270 aa).

Asp51 serves as the catalytic Nucleophile. Tyr109 serves as a coordination point for substrate.

Belongs to the tRNA pseudouridine synthase TruA family. In terms of assembly, homodimer.

The enzyme catalyses uridine(38/39/40) in tRNA = pseudouridine(38/39/40) in tRNA. Formation of pseudouridine at positions 38, 39 and 40 in the anticodon stem and loop of transfer RNAs. The sequence is that of tRNA pseudouridine synthase A from Burkholderia ambifaria (strain ATCC BAA-244 / DSM 16087 / CCUG 44356 / LMG 19182 / AMMD) (Burkholderia cepacia (strain AMMD)).